The following is a 607-amino-acid chain: MAPQQNGAEVDGIHTGKIYSVSGPVVVAEDMIGVAMYELVKVGHDQLVGEVIRINGDQATIQVYEETAGVMVGDPVLRTGKPLSVELGPGLLNNIYDGIQRPLEKIAEASNSIYIPRGIATPALDRKKKWEFTPTMKVGDHIAGGDVWGTVYENSFISVHKILLPPRARGTITRIAEKGEYTVEEKILEVEFDGKKTEYPMMQTWPVRVPRPAAEKHSANQPFLVGQRVLDALFPSVQGGTVAIPGAFGCGKTVISQSVSKFSNSDVIVYVGCGERGNEMAEVLKDFPELSIEVDGRKEPIMKRTTLIANTSNMPVAAREASIYTGITVAEYFRDQGMNVAMMADSSSRWAEALREISGRLGEMPADQGFPAYLGAKLASFYERAGKVQALGSPPREGSVSIVGAVSPPGGDFSDPVTSATLGIVQVFWGLDKKLAQRKHFPSINTSVSYSKYLTILDKWYEREYPDFPRLRDRIRQLLSDSEELDQVVQLVGKSALSDPDKITLDMATLIKEDFLQQNGYSDYDQFCPIWKTEWMMKLMMGFHDEAQKAIAQGQNWNKVREATQDLQAQLKSLKFEVPSEGQEKICKKYEAIQQQMLDKFASVIDE.

An ATP-binding site is contributed by 246-253 (GAFGCGKT).

This sequence belongs to the ATPase alpha/beta chains family. V-ATPase is a heteromultimeric enzyme composed of a peripheral catalytic V1 complex (components A to H) attached to an integral membrane V0 proton pore complex (components: a, c, c', c'', d, e, f and VOA1).

The protein resides in the vacuole membrane. It catalyses the reaction ATP + H2O + 4 H(+)(in) = ADP + phosphate + 5 H(+)(out). In terms of biological role, catalytic subunit of the V1 complex of vacuolar(H+)-ATPase (V-ATPase), a multisubunit enzyme composed of a peripheral complex (V1) that hydrolyzes ATP and a membrane integral complex (V0) that translocates protons. V-ATPase is responsible for acidifying and maintaining the pH of intracellular compartments. The chain is V-type proton ATPase catalytic subunit A (vma-1) from Neurospora crassa (strain ATCC 24698 / 74-OR23-1A / CBS 708.71 / DSM 1257 / FGSC 987).